Consider the following 601-residue polypeptide: Glutathione-regulated potassium-efflux system protein KefB (601 aa).

Helical transmembrane passes span 4–24, 29–49, 55–75, 87–107, 111–131, 152–172, 177–197, 207–227, 230–250, 262–282, 284–304, 324–344, and 356–376; these read ADLLTAGVLFLFAAVAAVPLA, IGAVLGYLLAGIAIGPWGLGF, EILHFSELGVVFLMFIIGLEL, IFGVGAAQVLLSAAVLAGLLM, FLWQAAVVGGIGLAMSSTAMA, VLLFQDLAVIPALALVPLLAG, HFDWFKVAMKVLAFAVMLIGG, FIAASGVREVFTAATLLLVLS, LFMDALGLSMALGTFIAGVLL, AIDPFKGLLLGLFFISVGMSL, LGVLYTHLLWVAASVVILVVI, MQFASVLSQGGEFAFVLFSTA, and ALLLVTVTLSMMTTPLLMKGI. The 120-residue stretch at 400-519 folds into the RCK N-terminal domain; sequence KPQVIVVGFG…AGVTQFSRET (120 aa).

It belongs to the monovalent cation:proton antiporter 2 (CPA2) transporter (TC 2.A.37) family. KefB subfamily. As to quaternary structure, interacts with the regulatory subunit KefG.

It localises to the cell inner membrane. Functionally, pore-forming subunit of a potassium efflux system that confers protection against electrophiles. Catalyzes K(+)/H(+) antiport. The chain is Glutathione-regulated potassium-efflux system protein KefB from Salmonella paratyphi A (strain ATCC 9150 / SARB42).